The following is a 428-amino-acid chain: 3-phosphoshikimate 1-carboxyvinyltransferase (428 aa).

3 residues coordinate 3-phosphoshikimate: K23, S24, and R28. K23 is a binding site for phosphoenolpyruvate. Residues G97 and R125 each contribute to the phosphoenolpyruvate site. 3-phosphoshikimate contacts are provided by S170, S171, Q172, S198, D314, N337, and K341. Q172 is a binding site for phosphoenolpyruvate. Catalysis depends on D314, which acts as the Proton acceptor. Phosphoenolpyruvate contacts are provided by R345, R387, and K412.

This sequence belongs to the EPSP synthase family. In terms of assembly, monomer.

It is found in the cytoplasm. The enzyme catalyses 3-phosphoshikimate + phosphoenolpyruvate = 5-O-(1-carboxyvinyl)-3-phosphoshikimate + phosphate. It participates in metabolic intermediate biosynthesis; chorismate biosynthesis; chorismate from D-erythrose 4-phosphate and phosphoenolpyruvate: step 6/7. In terms of biological role, catalyzes the transfer of the enolpyruvyl moiety of phosphoenolpyruvate (PEP) to the 5-hydroxyl of shikimate-3-phosphate (S3P) to produce enolpyruvyl shikimate-3-phosphate and inorganic phosphate. This chain is 3-phosphoshikimate 1-carboxyvinyltransferase, found in Edwardsiella ictaluri (strain 93-146).